A 224-amino-acid polypeptide reads, in one-letter code: Uracil phosphoribosyltransferase (224 aa).

Residue 38–42 (KGLVK) participates in GTP binding. 5-phospho-alpha-D-ribose 1-diphosphate contacts are provided by residues Arg87, Arg112, and 140-148 (DPMIATGST). Uracil is bound by residues Ile204 and 209-211 (GDA). Asp210 lines the 5-phospho-alpha-D-ribose 1-diphosphate pocket.

Belongs to the UPRTase family. It depends on Mg(2+) as a cofactor.

It catalyses the reaction UMP + diphosphate = 5-phospho-alpha-D-ribose 1-diphosphate + uracil. The protein operates within pyrimidine metabolism; UMP biosynthesis via salvage pathway; UMP from uracil: step 1/1. Its activity is regulated as follows. Allosterically activated by GTP. Catalyzes the conversion of uracil and 5-phospho-alpha-D-ribose 1-diphosphate (PRPP) to UMP and diphosphate. This chain is Uracil phosphoribosyltransferase, found in Thermococcus gammatolerans (strain DSM 15229 / JCM 11827 / EJ3).